A 561-amino-acid chain; its full sequence is Sperm-tail PG-rich repeat-containing protein 2 (561 aa).

STPGR repeat units follow at residues 21–34, 63–72, and 97–104; these read VGPG…PKQQ, PGPAHYNVSQ, and GPGPGSYN. Positions 123–143 are disordered; it reads PAVSRNIDIPSIPSSGKSHGY. STPGR repeat units lie at residues 164 to 191, 200 to 210, 250 to 285, 292 to 299, 334 to 367, 421 to 438, and 471 to 481; these read GPAY…NATG, GPGPGQYDIIQ, PGPG…TERF, TPAPGTYN, LPGP…FGSS, LPAP…MSQV, and GPGPATYSPVL.

This Mus musculus (Mouse) protein is Sperm-tail PG-rich repeat-containing protein 2 (Stpg2).